The chain runs to 207 residues: Ras-related protein Rab-8B (207 aa).

Residues Ser-17, Gly-18, Val-19, Gly-20, Lys-21, Thr-22, Cys-23, Thr-35, Ser-39, and Thr-40 each contribute to the GTP site. Thr-22 contributes to the Mg(2+) binding site. 2 consecutive short sequence motifs (switch) follow at residues 31–45 (DAFNTTFISTIGIDF) and 63–80 (DTAGQERFRTITTAYYRG). Mg(2+)-binding residues include Thr-40 and Asp-63. Gly-66 lines the GTP pocket. Thr-72 bears the Phosphothreonine mark. GTP-binding residues include Asn-121, Lys-122, Asp-124, Ala-152, and Lys-153. A phosphoserine mark is found at Ser-180 and Ser-183. At Cys-204 the chain carries Cysteine methyl ester. Residue Cys-204 is the site of S-geranylgeranyl cysteine attachment. Residues 205–207 (LLL) constitute a propeptide, removed in mature form.

The protein belongs to the small GTPase superfamily. Rab family. In terms of assembly, associated with actin, delta-catenin and alpha and beta tubulins. Interacts with OTOF. Interacts with PEX5R. Interacts with RAB3IP. Interacts with VIM. Interacts with CDH1. Interacts with MICALL2. Interacts with GDI1, GDI2, CHML and CHM; phosphorylation at Thr-72 disrupts these interactions. Interacts with MICAL1. Requires Mg(2+) as cofactor. Post-translationally, phosphorylation of Thr-72 in the switch II region by LRRK2 prevents the association of RAB regulatory proteins, including CHM, CHML and RAB GDP dissociation inhibitors GDI1 and GDI2.

Its subcellular location is the cell membrane. It localises to the cytoplasmic vesicle. It is found in the phagosome membrane. The protein resides in the endosome membrane. The catalysed reaction is GTP + H2O = GDP + phosphate + H(+). With respect to regulation, regulated by guanine nucleotide exchange factors (GEFs) including RAB3IP/RABIN8 which promotes the exchange of bound GDP for free GTP. Regulated by GTPase activating proteins (GAPs) which increase the GTP hydrolysis activity. Inhibited by GDP dissociation inhibitors (GDIs). Functionally, the small GTPases Rab are key regulators of intracellular membrane trafficking, from the formation of transport vesicles to their fusion with membranes. Rabs cycle between an inactive GDP-bound form and an active GTP-bound form that is able to recruit to membranes different sets of downstream effectors directly responsible for vesicle formation, movement, tethering and fusion. RAB8B may be involved in polarized vesicular trafficking and neurotransmitter release. May participate in cell junction dynamics in Sertoli cells. May also participate in the export of a subset of neosynthesized proteins through a Rab8-Rab10-Rab11-dependent endososomal export route. In Bos taurus (Bovine), this protein is Ras-related protein Rab-8B (RAB8B).